The sequence spans 270 residues: Formamidopyrimidine-DNA glycosylase (270 aa).

P2 (schiff-base intermediate with DNA) is an active-site residue. E3 acts as the Proton donor in catalysis. K58 (proton donor; for beta-elimination activity) is an active-site residue. Residues H91, R110, and R151 each contribute to the DNA site. The FPG-type zinc-finger motif lies at 236-270 (FVYGRGGMPCKLCGTTLREAKLGQRASVYCPRCQR). Residue R260 is the Proton donor; for delta-elimination activity of the active site.

It belongs to the FPG family. In terms of assembly, monomer. Zn(2+) serves as cofactor.

The catalysed reaction is Hydrolysis of DNA containing ring-opened 7-methylguanine residues, releasing 2,6-diamino-4-hydroxy-5-(N-methyl)formamidopyrimidine.. It catalyses the reaction 2'-deoxyribonucleotide-(2'-deoxyribose 5'-phosphate)-2'-deoxyribonucleotide-DNA = a 3'-end 2'-deoxyribonucleotide-(2,3-dehydro-2,3-deoxyribose 5'-phosphate)-DNA + a 5'-end 5'-phospho-2'-deoxyribonucleoside-DNA + H(+). Involved in base excision repair of DNA damaged by oxidation or by mutagenic agents. Acts as a DNA glycosylase that recognizes and removes damaged bases. Has a preference for oxidized purines, such as 7,8-dihydro-8-oxoguanine (8-oxoG). Has AP (apurinic/apyrimidinic) lyase activity and introduces nicks in the DNA strand. Cleaves the DNA backbone by beta-delta elimination to generate a single-strand break at the site of the removed base with both 3'- and 5'-phosphates. The chain is Formamidopyrimidine-DNA glycosylase from Pseudomonas putida (strain W619).